The sequence spans 81 residues: Antitoxin VapB28 (81 aa).

Functionally, antitoxin component of a type II toxin-antitoxin (TA) system. This is Antitoxin VapB28 (vapB28) from Mycobacterium tuberculosis (strain CDC 1551 / Oshkosh).